The following is an 844-amino-acid chain: Rho guanine nucleotide exchange factor 33 (844 aa).

Basic and acidic residues-rich tracts occupy residues 1 to 13 (MEKT…ENEH) and 101 to 113 (QQKI…EKRR). 3 disordered regions span residues 1–20 (MEKT…NNPS), 101–142 (QQKI…GSPF), and 169–189 (AQES…MGPG). Residues 54–129 (LEEKVKSCRC…AKKTQKEEHS (76 aa)) adopt a coiled-coil conformation. Polar residues predominate over residues 130–142 (SQAGPAQAQGSPF). The DH domain occupies 265 to 440 (KRQTVALELL…RVFISHYTLL (176 aa)). 3 disordered regions span residues 498-541 (LQPY…DWEL), 668-687 (RPEH…AGSS), and 702-745 (AKPL…RAAQ). At Arg-757 the chain carries Omega-N-methylarginine. Over residues 787 to 800 (DTTRFCPKEERESE) the composition is skewed to basic and acidic residues. The segment at 787-844 (DTTRFCPKEERESEQTSFSDQNPRQDQKGGFRSSFRKLFKKKNGNATGEDFCGPWGWW) is disordered. Basic residues predominate over residues 820–829 (SFRKLFKKKN).

In terms of biological role, may act as a guanine-nucleotide releasing factor. The protein is Rho guanine nucleotide exchange factor 33 (ARHGEF33) of Homo sapiens (Human).